We begin with the raw amino-acid sequence, 727 residues long: Procollagen-lysine,2-oxoglutarate 5-dioxygenase 1 (727 aa).

The N-terminal stretch at 1-18 (MRPLLLLAPLGWLLLAEA) is a signal peptide. N-linked (GlcNAc...) asparagine glycans are attached at residues asparagine 163, asparagine 197, and asparagine 538. The Fe2OG dioxygenase domain maps to 636 to 727 (QFDLAFVVRY…RYIAVSFVDP (92 aa)). Histidine 656 and aspartate 658 together coordinate Fe cation. Asparagine 686 carries N-linked (GlcNAc...) asparagine glycosylation. Residue histidine 708 participates in Fe cation binding. Arginine 718 is an active-site residue.

Homodimer. Identified in a complex with P3H3 and P3H4. Requires Fe(2+) as cofactor. L-ascorbate serves as cofactor.

Its subcellular location is the rough endoplasmic reticulum membrane. The enzyme catalyses L-lysyl-[collagen] + 2-oxoglutarate + O2 = (5R)-5-hydroxy-L-lysyl-[collagen] + succinate + CO2. In terms of biological role, part of a complex composed of PLOD1, P3H3 and P3H4 that catalyzes hydroxylation of lysine residues in collagen alpha chains and is required for normal assembly and cross-linkling of collagen fibrils. Forms hydroxylysine residues in -Xaa-Lys-Gly- sequences in collagens. These hydroxylysines serve as sites of attachment for carbohydrate units and are essential for the stability of the intermolecular collagen cross-links. The sequence is that of Procollagen-lysine,2-oxoglutarate 5-dioxygenase 1 (PLOD1) from Pongo abelii (Sumatran orangutan).